The chain runs to 416 residues: Gamma-glutamyl phosphate reductase (416 aa).

Belongs to the gamma-glutamyl phosphate reductase family.

The protein localises to the cytoplasm. The catalysed reaction is L-glutamate 5-semialdehyde + phosphate + NADP(+) = L-glutamyl 5-phosphate + NADPH + H(+). The protein operates within amino-acid biosynthesis; L-proline biosynthesis; L-glutamate 5-semialdehyde from L-glutamate: step 2/2. Functionally, catalyzes the NADPH-dependent reduction of L-glutamate 5-phosphate into L-glutamate 5-semialdehyde and phosphate. The product spontaneously undergoes cyclization to form 1-pyrroline-5-carboxylate. The chain is Gamma-glutamyl phosphate reductase from Streptococcus pyogenes serotype M4 (strain MGAS10750).